Reading from the N-terminus, the 147-residue chain is Effector TSP1 (147 aa).

The signal sequence occupies residues Met-1 to Ala-19. 2 disulfide bridges follow: Cys-44–Cys-51 and Cys-67–Cys-87.

In terms of assembly, homodimer.

It localises to the secreted. Functionally, stimulates salicylic acid signaling in host plant roots. The protein is Effector TSP1 of Hypocrea virens (strain Gv29-8 / FGSC 10586) (Gliocladium virens).